We begin with the raw amino-acid sequence, 211 residues long: Large ribosomal subunit protein uL4 (211 aa).

The segment covering 41–53 has biased composition (polar residues); that stretch reads QAHSRQGTASTLT. Residues 41 to 78 form a disordered region; that stretch reads QAHSRQGTASTLTRAEVRGGGRKPYKQKGTGRARQGTI. The segment covering 60 to 71 has biased composition (basic residues); that stretch reads GGRKPYKQKGTG.

It belongs to the universal ribosomal protein uL4 family. In terms of assembly, part of the 50S ribosomal subunit.

In terms of biological role, one of the primary rRNA binding proteins, this protein initially binds near the 5'-end of the 23S rRNA. It is important during the early stages of 50S assembly. It makes multiple contacts with different domains of the 23S rRNA in the assembled 50S subunit and ribosome. Functionally, forms part of the polypeptide exit tunnel. This Prochlorococcus marinus (strain MIT 9303) protein is Large ribosomal subunit protein uL4.